Here is a 388-residue protein sequence, read N- to C-terminus: Succinate--CoA ligase [ADP-forming] subunit beta (388 aa).

An ATP-grasp domain is found at 9 to 244; the sequence is KEILRKYNVP…LDEEDANEIE (236 aa). Residues Lys-46, 53 to 55, Glu-99, Ala-102, and Glu-107 each bind ATP; that span reads GRG. Mg(2+)-binding residues include Asn-199 and Asp-213. Substrate contacts are provided by residues Asn-264 and 321 to 323; that span reads GIM.

This sequence belongs to the succinate/malate CoA ligase beta subunit family. In terms of assembly, heterotetramer of two alpha and two beta subunits. Mg(2+) is required as a cofactor.

It catalyses the reaction succinate + ATP + CoA = succinyl-CoA + ADP + phosphate. The catalysed reaction is GTP + succinate + CoA = succinyl-CoA + GDP + phosphate. Its pathway is carbohydrate metabolism; tricarboxylic acid cycle; succinate from succinyl-CoA (ligase route): step 1/1. In terms of biological role, succinyl-CoA synthetase functions in the citric acid cycle (TCA), coupling the hydrolysis of succinyl-CoA to the synthesis of either ATP or GTP and thus represents the only step of substrate-level phosphorylation in the TCA. The beta subunit provides nucleotide specificity of the enzyme and binds the substrate succinate, while the binding sites for coenzyme A and phosphate are found in the alpha subunit. This Ralstonia nicotianae (strain ATCC BAA-1114 / GMI1000) (Ralstonia solanacearum) protein is Succinate--CoA ligase [ADP-forming] subunit beta.